Reading from the N-terminus, the 250-residue chain is Small ribosomal subunit protein uS3 (250 aa).

Positions valine 39–aspartate 107 constitute a KH type-2 domain. The segment at valine 214–glutamate 250 is disordered. Basic and acidic residues predominate over residues glutamine 220 to glutamate 250.

Belongs to the universal ribosomal protein uS3 family. In terms of assembly, part of the 30S ribosomal subunit. Forms a tight complex with proteins S10 and S14.

In terms of biological role, binds the lower part of the 30S subunit head. Binds mRNA in the 70S ribosome, positioning it for translation. This is Small ribosomal subunit protein uS3 from Acinetobacter baylyi (strain ATCC 33305 / BD413 / ADP1).